The sequence spans 208 residues: ATP-dependent Clp protease proteolytic subunit 2 (208 aa).

Residue serine 102 is the Nucleophile of the active site. Residue histidine 127 is part of the active site.

This sequence belongs to the peptidase S14 family. As to quaternary structure, fourteen ClpP subunits assemble into 2 heptameric rings which stack back to back to give a disk-like structure with a central cavity, resembling the structure of eukaryotic proteasomes.

Its subcellular location is the cytoplasm. It carries out the reaction Hydrolysis of proteins to small peptides in the presence of ATP and magnesium. alpha-casein is the usual test substrate. In the absence of ATP, only oligopeptides shorter than five residues are hydrolyzed (such as succinyl-Leu-Tyr-|-NHMec, and Leu-Tyr-Leu-|-Tyr-Trp, in which cleavage of the -Tyr-|-Leu- and -Tyr-|-Trp bonds also occurs).. Cleaves peptides in various proteins in a process that requires ATP hydrolysis. Has a chymotrypsin-like activity. Plays a major role in the degradation of misfolded proteins. The protein is ATP-dependent Clp protease proteolytic subunit 2 of Chelativorans sp. (strain BNC1).